Here is a 134-residue protein sequence, read N- to C-terminus: Profilin-2 (134 aa).

Cys13 and Cys118 form a disulfide bridge. The Involved in PIP2 interaction motif lies at 84 to 100 (AVIRGKKGSGGITIKKT). Thr114 carries the post-translational modification Phosphothreonine.

This sequence belongs to the profilin family. Occurs in many kinds of cells as a complex with monomeric actin in a 1:1 ratio. Post-translationally, phosphorylated by MAP kinases.

The protein localises to the cytoplasm. Its subcellular location is the cytoskeleton. In terms of biological role, binds to actin and affects the structure of the cytoskeleton. At high concentrations, profilin prevents the polymerization of actin, whereas it enhances it at low concentrations. This chain is Profilin-2, found in Olea europaea (Common olive).